The chain runs to 487 residues: Iron-sulfur cluster assembly SufBD family protein ycf24 (487 aa).

This sequence belongs to the iron-sulfur cluster assembly SufBD family.

It localises to the plastid. Its subcellular location is the chloroplast. This is Iron-sulfur cluster assembly SufBD family protein ycf24 (ycf24) from Pyropia yezoensis (Susabi-nori).